Here is a 136-residue protein sequence, read N- to C-terminus: uncharacterized protein (136 aa).

Residues 40 to 62 traverse the membrane as a helical segment; the sequence is LFYSISLCVSLLLHISLCVSVYV.

It is found in the membrane. This is an uncharacterized protein from Homo sapiens (Human).